The following is a 331-amino-acid chain: Holliday junction branch migration complex subunit RuvB (331 aa).

The segment at 1–178 (MRNSIFEQEE…FGITLRLDFY (178 aa)) is large ATPase domain (RuvB-L). ATP is bound by residues Leu-17, Arg-18, Gly-59, Lys-62, Thr-63, Thr-64, 125 to 127 (EDY), Arg-168, Tyr-178, and Arg-215. Mg(2+) is bound at residue Thr-63. The segment at 179–249 (TVSELLQLLQ…FADLALNKME (71 aa)) is small ATPAse domain (RuvB-S). A head domain (RuvB-H) region spans residues 252-331 (QFGLDKLDYT…LSTINSARLP (80 aa)). Residues Arg-307 and Arg-312 each coordinate DNA.

The protein belongs to the RuvB family. Homohexamer. Forms an RuvA(8)-RuvB(12)-Holliday junction (HJ) complex. HJ DNA is sandwiched between 2 RuvA tetramers; dsDNA enters through RuvA and exits via RuvB. An RuvB hexamer assembles on each DNA strand where it exits the tetramer. Each RuvB hexamer is contacted by two RuvA subunits (via domain III) on 2 adjacent RuvB subunits; this complex drives branch migration. In the full resolvosome a probable DNA-RuvA(4)-RuvB(12)-RuvC(2) complex forms which resolves the HJ.

The protein resides in the cytoplasm. The catalysed reaction is ATP + H2O = ADP + phosphate + H(+). In terms of biological role, the RuvA-RuvB-RuvC complex processes Holliday junction (HJ) DNA during genetic recombination and DNA repair, while the RuvA-RuvB complex plays an important role in the rescue of blocked DNA replication forks via replication fork reversal (RFR). RuvA specifically binds to HJ cruciform DNA, conferring on it an open structure. The RuvB hexamer acts as an ATP-dependent pump, pulling dsDNA into and through the RuvAB complex. RuvB forms 2 homohexamers on either side of HJ DNA bound by 1 or 2 RuvA tetramers; 4 subunits per hexamer contact DNA at a time. Coordinated motions by a converter formed by DNA-disengaged RuvB subunits stimulates ATP hydrolysis and nucleotide exchange. Immobilization of the converter enables RuvB to convert the ATP-contained energy into a lever motion, pulling 2 nucleotides of DNA out of the RuvA tetramer per ATP hydrolyzed, thus driving DNA branch migration. The RuvB motors rotate together with the DNA substrate, which together with the progressing nucleotide cycle form the mechanistic basis for DNA recombination by continuous HJ branch migration. Branch migration allows RuvC to scan DNA until it finds its consensus sequence, where it cleaves and resolves cruciform DNA. The sequence is that of Holliday junction branch migration complex subunit RuvB from Neorickettsia sennetsu (strain ATCC VR-367 / Miyayama) (Ehrlichia sennetsu).